We begin with the raw amino-acid sequence, 406 residues long: Argininosuccinate synthase (406 aa).

ATP-binding positions include 11–19 and Ala38; that span reads AYSGGLDTS. L-citrulline is bound by residues Tyr91 and Ser96. Gly121 contributes to the ATP binding site. 3 residues coordinate L-aspartate: Thr123, Asn127, and Asp128. Asn127 is a binding site for L-citrulline. Positions 131, 181, 190, 266, and 278 each coordinate L-citrulline.

The protein belongs to the argininosuccinate synthase family. Type 1 subfamily. In terms of assembly, homotetramer.

The protein localises to the cytoplasm. The catalysed reaction is L-citrulline + L-aspartate + ATP = 2-(N(omega)-L-arginino)succinate + AMP + diphosphate + H(+). It participates in amino-acid biosynthesis; L-arginine biosynthesis; L-arginine from L-ornithine and carbamoyl phosphate: step 2/3. The polypeptide is Argininosuccinate synthase (Campylobacter jejuni subsp. jejuni serotype O:23/36 (strain 81-176)).